Consider the following 614-residue polypeptide: Subtilin transport ATP-binding protein SpaT (614 aa).

A run of 5 helical transmembrane segments spans residues 34–54 (FLKLIRFSIITGILPIVSLYI), 69–89 (VSIVITIFLTYLGVSFFSELI), 147–167 (IIQAIITMTTSFVTLLSSIAF), 175–195 (VSLLLLVIPVISLFYFLKIGQ), and 267–287 (IAVQLVGAVIIFIAIMSAFAG). In terms of domain architecture, ABC transmembrane type-1 spans 34–320 (FLKLIRFSII…IMTSIYSIYN (287 aa)). An ABC transporter domain is found at 353–593 (VVFQNVSFIY…CPLYKKMDES (241 aa)). An ATP-binding site is contributed by 387–394 (GPNGSGKK).

It belongs to the ABC transporter superfamily.

It is found in the cell membrane. Functionally, probably implicated in the export process of the lantibiotic subtilin. In Bacillus subtilis, this protein is Subtilin transport ATP-binding protein SpaT (spaT).